A 142-amino-acid polypeptide reads, in one-letter code: Endoribonuclease YbeY (142 aa).

Zn(2+)-binding residues include His-100, His-104, and His-110.

This sequence belongs to the endoribonuclease YbeY family. The cofactor is Zn(2+).

It localises to the cytoplasm. Single strand-specific metallo-endoribonuclease involved in late-stage 70S ribosome quality control and in maturation of the 3' terminus of the 16S rRNA. This chain is Endoribonuclease YbeY, found in Helicobacter pylori (strain G27).